The sequence spans 458 residues: tRNA modification GTPase MnmE (458 aa).

Arg-22, Glu-84, and Arg-123 together coordinate (6S)-5-formyl-5,6,7,8-tetrahydrofolate. The region spanning 220-379 (GIATAIIGRP…LEKAIADLFF (160 aa)) is the TrmE-type G domain. K(+) is bound at residue Asn-230. Residues 230–235 (NVGKSS), 249–255 (TDIAGTT), and 274–277 (DTAG) each bind GTP. Ser-234 contacts Mg(2+). K(+) contacts are provided by Thr-249, Ile-251, and Thr-254. Thr-255 contributes to the Mg(2+) binding site. Lys-458 provides a ligand contact to (6S)-5-formyl-5,6,7,8-tetrahydrofolate.

The protein belongs to the TRAFAC class TrmE-Era-EngA-EngB-Septin-like GTPase superfamily. TrmE GTPase family. In terms of assembly, homodimer. Heterotetramer of two MnmE and two MnmG subunits. Requires K(+) as cofactor.

The protein localises to the cytoplasm. Functionally, exhibits a very high intrinsic GTPase hydrolysis rate. Involved in the addition of a carboxymethylaminomethyl (cmnm) group at the wobble position (U34) of certain tRNAs, forming tRNA-cmnm(5)s(2)U34. The chain is tRNA modification GTPase MnmE from Bacillus cereus (strain ZK / E33L).